The sequence spans 354 residues: Uroporphyrinogen decarboxylase (354 aa).

Substrate-binding positions include 27–31 (RQAGR), D77, Y154, T209, and H327.

The protein belongs to the uroporphyrinogen decarboxylase family. As to quaternary structure, homodimer.

It is found in the cytoplasm. It catalyses the reaction uroporphyrinogen III + 4 H(+) = coproporphyrinogen III + 4 CO2. It functions in the pathway porphyrin-containing compound metabolism; protoporphyrin-IX biosynthesis; coproporphyrinogen-III from 5-aminolevulinate: step 4/4. Its function is as follows. Catalyzes the decarboxylation of four acetate groups of uroporphyrinogen-III to yield coproporphyrinogen-III. The protein is Uroporphyrinogen decarboxylase of Escherichia coli O7:K1 (strain IAI39 / ExPEC).